The sequence spans 470 residues: Probable citrate synthase, mitochondrial (470 aa).

Residues His-297, His-351, and Asp-406 contribute to the active site.

The protein belongs to the citrate synthase family. As to quaternary structure, homodimer.

The protein localises to the mitochondrion matrix. It carries out the reaction oxaloacetate + acetyl-CoA + H2O = citrate + CoA + H(+). It participates in carbohydrate metabolism; tricarboxylic acid cycle; isocitrate from oxaloacetate: step 1/2. This chain is Probable citrate synthase, mitochondrial, found in Leishmania braziliensis.